The chain runs to 143 residues: MFFGTFTPKMDDKGRLTLPAKFRDELAEGLMVTKGQDHSLAIYPRNVFLERARKAAAASRTNPEARAFVRNLAASADEQSVDGHGRITISPDHRRYAGLSKECVVIGSVDFVEIWNAESWNQYQAEHEESYANGDDAAFMDFL.

SpoVT-AbrB domains are found at residues 5–47 (TFTP…PRNV) and 76–119 (ADEQ…NAES).

It belongs to the MraZ family. Forms oligomers.

It is found in the cytoplasm. The protein localises to the nucleoid. This chain is Transcriptional regulator MraZ, found in Corynebacterium kroppenstedtii (strain DSM 44385 / JCM 11950 / CIP 105744 / CCUG 35717).